The primary structure comprises 378 residues: Erythronate-4-phosphate dehydrogenase (378 aa).

Substrate is bound by residues serine 45 and threonine 66. Residues aspartate 146 and threonine 175 each coordinate NAD(+). Residue arginine 208 is part of the active site. NAD(+) is bound at residue aspartate 232. Residue glutamate 237 is part of the active site. Histidine 254 (proton donor) is an active-site residue. Glycine 257 contacts NAD(+). Tyrosine 258 contacts substrate.

This sequence belongs to the D-isomer specific 2-hydroxyacid dehydrogenase family. PdxB subfamily. As to quaternary structure, homodimer.

It is found in the cytoplasm. It catalyses the reaction 4-phospho-D-erythronate + NAD(+) = (R)-3-hydroxy-2-oxo-4-phosphooxybutanoate + NADH + H(+). Its pathway is cofactor biosynthesis; pyridoxine 5'-phosphate biosynthesis; pyridoxine 5'-phosphate from D-erythrose 4-phosphate: step 2/5. Catalyzes the oxidation of erythronate-4-phosphate to 3-hydroxy-2-oxo-4-phosphonooxybutanoate. In Escherichia coli O81 (strain ED1a), this protein is Erythronate-4-phosphate dehydrogenase.